Consider the following 354-residue polypeptide: Protein RecA (354 aa).

67-74 (GPESSGKT) contributes to the ATP binding site.

Belongs to the RecA family.

It is found in the cytoplasm. Can catalyze the hydrolysis of ATP in the presence of single-stranded DNA, the ATP-dependent uptake of single-stranded DNA by duplex DNA, and the ATP-dependent hybridization of homologous single-stranded DNAs. It interacts with LexA causing its activation and leading to its autocatalytic cleavage. The protein is Protein RecA of Yersinia enterocolitica serotype O:8 / biotype 1B (strain NCTC 13174 / 8081).